A 297-amino-acid chain; its full sequence is CASP-like protein 4A2 (297 aa).

Residues 1–136 form a disordered region; that stretch reads MKMKRTVSSN…MNGEESATTA (136 aa). Topologically, residues 1 to 149 are cytoplasmic; the sequence is MKMKRTVSSN…ARRDDLVSVT (149 aa). Over residues 8–19 the composition is skewed to low complexity; the sequence is SSNSEAYSYNES. Pro residues predominate over residues 69–83; sequence LPSPIPPPPPQIPPP. A compositionally biased stretch (polar residues) spans 93–121; the sequence is MNSSLDKSPSSMVVQNSWVREDGQQNTTR. The chain crosses the membrane as a helical span at residues 150 to 170; it reads ALGFRITEVILCVISFSIMAA. Residues 171–189 lie on the Extracellular side of the membrane; it reads DKTQGWSGDSYDRYKEYRY. A helical transmembrane segment spans residues 190–210; that stretch reads CLAVNVIAFVYSAFEACDAAC. The Cytoplasmic portion of the chain corresponds to 211 to 225; the sequence is YMAKESYMMNCGFHD. The helical transmembrane segment at 226–246 threads the bilayer; sequence LFVFSMDQLLAYLLMSASSCA. Residues 247–265 lie on the Extracellular side of the membrane; it reads ATRVDDWVSNWGKDEFTQM. A helical transmembrane segment spans residues 266 to 286; the sequence is ATASIAVSFLAFGAFAVSALI. The Cytoplasmic segment spans residues 287-297; sequence SSYRLFTHASS.

Belongs to the Casparian strip membrane proteins (CASP) family. Homodimer and heterodimers.

It localises to the cell membrane. In Arabidopsis lyrata subsp. lyrata (Lyre-leaved rock-cress), this protein is CASP-like protein 4A2.